The following is a 386-amino-acid chain: Succinate--CoA ligase [ADP-forming] subunit beta (386 aa).

Residues 9-244 enclose the ATP-grasp domain; the sequence is KELLREFGVA…TTEEDPREVE (236 aa). Residues K46, 53–55, E99, S102, and E107 contribute to the ATP site; that span reads GRG. Mg(2+) contacts are provided by N199 and D213. Residues N264 and 321-323 each bind substrate; that span reads GIM.

The protein belongs to the succinate/malate CoA ligase beta subunit family. In terms of assembly, heterotetramer of two alpha and two beta subunits. Mg(2+) serves as cofactor.

The enzyme catalyses succinate + ATP + CoA = succinyl-CoA + ADP + phosphate. It catalyses the reaction GTP + succinate + CoA = succinyl-CoA + GDP + phosphate. It functions in the pathway carbohydrate metabolism; tricarboxylic acid cycle; succinate from succinyl-CoA (ligase route): step 1/1. In terms of biological role, succinyl-CoA synthetase functions in the citric acid cycle (TCA), coupling the hydrolysis of succinyl-CoA to the synthesis of either ATP or GTP and thus represents the only step of substrate-level phosphorylation in the TCA. The beta subunit provides nucleotide specificity of the enzyme and binds the substrate succinate, while the binding sites for coenzyme A and phosphate are found in the alpha subunit. In Exiguobacterium sp. (strain ATCC BAA-1283 / AT1b), this protein is Succinate--CoA ligase [ADP-forming] subunit beta.